Consider the following 555-residue polypeptide: Vacuolar fusion protein MON1 homolog A (555 aa).

Basic and acidic residues predominate over residues 1-12 (MAADMQRKRSSE). The tract at residues 1-87 (MAADMQRKRS…RGPPPLPADM (87 aa)) is disordered. Residues Ser-31 and Ser-56 each carry the phosphoserine modification. At Thr-61 the chain carries Phosphothreonine. Position 91 is a phosphoserine (Ser-91). Residues 114 to 147 (PGSSEDWLDPPGAVGRPATEPPREGTAEGDEEDA) form a disordered region.

This sequence belongs to the MON1/SAND family. As to quaternary structure, interacts with CCZ1. Found in a complex with RMC1, CCZ1, MON1A and MON1B. The MON1A-CCZ1B complex interacts with RIMOC1. The MON1A-CCZ1B complex interacts with RAB7A and this interaction is enhanced in the presence of RIMOC1.

Functionally, plays an important role in membrane trafficking through the secretory apparatus. Not involved in endocytic trafficking to lysosomes. Acts in concert with CCZ1, as a guanine exchange factor (GEF) for RAB7, promotes the exchange of GDP to GTP, converting it from an inactive GDP-bound form into an active GTP-bound form. The polypeptide is Vacuolar fusion protein MON1 homolog A (MON1A) (Macaca fascicularis (Crab-eating macaque)).